The sequence spans 218 residues: Small ribosomal subunit protein uS3c (218 aa).

Residues 39 to 118 (IRNFIKNYVQ…KLNIAITRIA (80 aa)) form the KH type-2 domain.

Belongs to the universal ribosomal protein uS3 family. Part of the 30S ribosomal subunit.

Its subcellular location is the plastid. The protein localises to the chloroplast. In Ipomoea purpurea (Common morning glory), this protein is Small ribosomal subunit protein uS3c (rps3).